The primary structure comprises 332 residues: MAAIKDSLLAQVAEVLPSSGHKVTIVGIGQVGMASAFSILAQNVSKEVCLIDVCADKLQGELMDLQHGSNFLKNPQITASTDFAASANSRLCIVTAGVRQKEGESRLSLVQRNTDILKNIIPKLVEYSPDTILLMVSNPVDIMTYVAWKLSGLPKNRVIGSGTNLDSSRFRFLMSQRLGVAPTSCHGWIIGEHGDSSVPVWSGVNIAGVRLRELNPILGTGEDPEKWNELHKQVVDSAYEVIKLKGYTSWAIGLSTASLASAILRNTSSVAAVSTSVLGEHGIDKDVFLSLPCVLNANGVTSVVKQILTPTEVEQLQKSANIMSDVQAGLKF.

NAD(+) contacts are provided by residues 29 to 57 and arginine 99; that span reads GQVG…CADK. Substrate-binding residues include arginine 106, asparagine 138, and arginine 169. Asparagine 138 contacts NAD(+). Histidine 193 acts as the Proton acceptor in catalysis. A substrate-binding site is contributed by threonine 248.

This sequence belongs to the LDH/MDH superfamily. LDH family. In terms of assembly, homotetramer.

It is found in the cytoplasm. It carries out the reaction (S)-lactate + NAD(+) = pyruvate + NADH + H(+). Its pathway is fermentation; pyruvate fermentation to lactate; (S)-lactate from pyruvate: step 1/1. The sequence is that of L-lactate dehydrogenase from Drosophila melanogaster (Fruit fly).